Here is a 380-residue protein sequence, read N- to C-terminus: uncharacterized protein (380 aa).

Disordered stretches follow at residues alanine 278–alanine 323 and serine 345–arginine 368. Basic residues predominate over residues arginine 301–alanine 319.

This is an uncharacterized protein from Mycobacterium tuberculosis (strain CDC 1551 / Oshkosh).